A 120-amino-acid polypeptide reads, in one-letter code: Large ribosomal subunit protein uL14 (120 aa).

Belongs to the universal ribosomal protein uL14 family. Part of the 50S ribosomal subunit. Forms a cluster with proteins L3 and L19. In the 70S ribosome, L14 and L19 interact and together make contacts with the 16S rRNA in bridges B5 and B8.

Binds to 23S rRNA. Forms part of two intersubunit bridges in the 70S ribosome. In Phytoplasma australiense, this protein is Large ribosomal subunit protein uL14.